A 426-amino-acid chain; its full sequence is Glutamyl-tRNA reductase (426 aa).

Residues threonine 49–arginine 52, serine 109, glutamate 114–glutamine 116, and glutamine 120 contribute to the substrate site. Cysteine 50 functions as the Nucleophile in the catalytic mechanism. Glycine 189–glycine 194 serves as a coordination point for NADP(+).

This sequence belongs to the glutamyl-tRNA reductase family. Homodimer.

It carries out the reaction (S)-4-amino-5-oxopentanoate + tRNA(Glu) + NADP(+) = L-glutamyl-tRNA(Glu) + NADPH + H(+). The protein operates within porphyrin-containing compound metabolism; protoporphyrin-IX biosynthesis; 5-aminolevulinate from L-glutamyl-tRNA(Glu): step 1/2. It participates in porphyrin-containing compound metabolism; chlorophyll biosynthesis. Catalyzes the NADPH-dependent reduction of glutamyl-tRNA(Glu) to glutamate 1-semialdehyde (GSA). The protein is Glutamyl-tRNA reductase of Chlorobium chlorochromatii (strain CaD3).